A 604-amino-acid polypeptide reads, in one-letter code: Zinc finger protein chinmo (604 aa).

The BTB domain maps to 32-98; sequence ADVILSCDGV…MYKGEVHVSQ (67 aa). Disordered regions lie at residues 122–155, 291–310, 330–437, and 450–470; these read RLAA…SGGS, CDSL…GYTH, RSPY…DEST, and NLKY…TPNT. Residues 364–374 are compositionally biased toward low complexity; that stretch reads PSSSASSTAPT. Residues 384-409 are compositionally biased toward polar residues; the sequence is ASPQSSRYENHSPSTTAGNGNATSSL. Acidic residues predominate over residues 425-437; it reads ANDDDRELMDEST. The segment covering 461–470 has biased composition (low complexity); the sequence is SNTSSTTPNT. C2H2-type zinc fingers lie at residues 517–540 and 545–568; these read LKCL…RQRH and VPCP…AREH.

As to expression, broadly expressed in the developing larval central nervous system (at protein level). Expressed in the larval lymph gland and circulating hemocytes (at protein level). Expressed in all cell types of the adult testis stem cell niche but not detected in somatic cells of the adult ovary (at protein level). In the testis, expressed at high levels in cyst stem cells and early cyst cells and, at lower levels, in germline stem cells (at protein level).

It localises to the nucleus. In terms of biological role, required for morphological differentiation of postmitotic neurons during postembryonic brain development. Ensures production of appropriate neuron subtypes within a lineage by preventing precocious generation of late neuronal types of that lineage. Acts as a downstream mediator of the transcriptional activator Stat92e and is required for the development of the eye-antennal disk which gives rise to the adult eye, antenna and head capsule, for transcriptional repression of the Notch receptor ligand Ser and for the self-renewal of cyst stem cells in the testis. In the adult testis, maintains the male identify of adult somatic cyst stem cells. Represses expression and alternative splicing of transformer pre-mRNA, resulting in the production of the male-specific isoform of transcription factor dsx which ensures male-specific transcription of target genes. Plays a role in actin nuclear localization through its involvement in repressing the expression of the kinase Cdi. This maintains the cofilin/actin-depolymerizing factor homolog tsr in its unphosphorylated state which is required for actin nuclear import. In Drosophila melanogaster (Fruit fly), this protein is Zinc finger protein chinmo.